The primary structure comprises 178 residues: Conodipine-P2 (178 aa).

Residues 1–24 (MKLLAPVLWAMAALGVTWLVAVDS) form the signal peptide. 4-hydroxyproline occurs at positions 38, 42, and 49. His-54 is an active-site residue. Residues 98 to 130 (KREVTSHRATSIAHSRLWKTALDQKSFLNRKAR) constitute a propeptide, interchain peptide. Position 131 is a pyrrolidone carboxylic acid (Gln-131). Position 137 is a 4-hydroxyproline (Pro-137).

Belongs to the phospholipase A2 family. Group IX subfamily. Heterodimer of an alpha and a beta chain; probably disulfide-linked. The cofactor is Ca(2+). In terms of tissue distribution, expressed by the venom duct.

The protein resides in the secreted. It catalyses the reaction a 1,2-diacyl-sn-glycero-3-phosphocholine + H2O = a 1-acyl-sn-glycero-3-phosphocholine + a fatty acid + H(+). Functionally, catalyzes the calcium-dependent hydrolysis of the 2-acyl groups in 3-sn-phosphoglycerides. This Conus purpurascens (Purple cone) protein is Conodipine-P2.